The following is a 158-amino-acid chain: Protein hunchback (158 aa).

Positions 18–34 (HNHHHHHHHGHHQHQQR) are enriched in basic residues. Disordered stretches follow at residues 18 to 96 (HNHH…TTTA) and 118 to 158 (LTPP…KYMA). Positions 41 to 50 (ASSPHQSPLP) are enriched in polar residues. Residues 52–65 (LQLEQYLKQQQQQP) show a composition bias toward low complexity. A compositionally biased stretch (basic and acidic residues) spans 139–158 (EPEKEHDLMSNSSEDMKYMA).

This sequence belongs to the hunchback C2H2-type zinc-finger protein family.

It localises to the nucleus. Its function is as follows. Gap class segmentation protein that controls development of head structures. The protein is Protein hunchback (hb) of Drosophila mimica (Fruit fly).